A 316-amino-acid polypeptide reads, in one-letter code: Olfactory receptor 4N4 (316 aa).

Residues 1–25 (MKIANNTVVTEFILLGLTQSQDIQL) lie on the Extracellular side of the membrane. Asparagine 5 carries an N-linked (GlcNAc...) asparagine glycan. A helical membrane pass occupies residues 26-49 (LVFVLILIFYLIILPGNFLIIFTI). Residues 50–57 (RSDPGLTA) are Cytoplasmic-facing. Residues 58–79 (PLYLFLGNLAFLDASYSFIVAP) traverse the membrane as a helical segment. Residues 80-100 (RMLVDFLSEKKVISYRGCITQ) are Extracellular-facing. Cysteines 97 and 189 form a disulfide. Residues 101–120 (LFFLHFLGGGEGLLLVVMAF) traverse the membrane as a helical segment. Residues 121–139 (DRYIAICRPLHCSTVMNPR) lie on the Cytoplasmic side of the membrane. Residues 140-158 (ACYAMMLALWLGGFVHSII) form a helical membrane-spanning segment. The Extracellular segment spans residues 159–195 (QVVLILRLPFCGPNQLDNFFCDVRQVIKLACTDMFVV). Residues 196-219 (ELLMVFNSGLMTLLCFLGLLASYA) traverse the membrane as a helical segment. The Cytoplasmic segment spans residues 220-235 (VILCHVRRAASEGKNK). A helical membrane pass occupies residues 236-258 (AMSTCTTRVIIILLMFGPAIFIY). Residues 259–269 (MCPFRALPADK) lie on the Extracellular side of the membrane. The chain crosses the membrane as a helical span at residues 270–289 (MVSLFHTVIFPLMNPMIYTL). Residues 290–316 (RNQEVKTSMKRLLSRHVVCQVDFIIRN) lie on the Cytoplasmic side of the membrane.

It belongs to the G-protein coupled receptor 1 family.

The protein localises to the cell membrane. In terms of biological role, odorant receptor. This chain is Olfactory receptor 4N4 (OR4N4), found in Homo sapiens (Human).